The following is a 160-amino-acid chain: Small ribosomal subunit protein uS9 (160 aa).

It belongs to the universal ribosomal protein uS9 family.

This Bradyrhizobium sp. (strain ORS 278) protein is Small ribosomal subunit protein uS9.